Reading from the N-terminus, the 1026-residue chain is Exportin-T (1026 aa).

Belongs to the exportin family.

It is found in the nucleus. The protein localises to the cytoplasm. TRNA nucleus export receptor which facilitates tRNA translocation across the nuclear pore complex. Involved in pre-tRNA splicing, probably by affecting the interaction of pre-tRNA with splicing endonuclease. The polypeptide is Exportin-T (los1) (Neurospora crassa (strain ATCC 24698 / 74-OR23-1A / CBS 708.71 / DSM 1257 / FGSC 987)).